The sequence spans 275 residues: Rhamnulose-1-phosphate aldolase (275 aa).

Residue glutamate 117 is part of the active site. Residues histidine 141, histidine 143, and histidine 212 each contribute to the Zn(2+) site.

It belongs to the aldolase class II family. RhaD subfamily. Homotetramer. The cofactor is Zn(2+).

The protein localises to the cytoplasm. It catalyses the reaction L-rhamnulose 1-phosphate = (S)-lactaldehyde + dihydroxyacetone phosphate. It functions in the pathway carbohydrate degradation; L-rhamnose degradation; glycerone phosphate from L-rhamnose: step 3/3. Functionally, catalyzes the reversible cleavage of L-rhamnulose-1-phosphate to dihydroxyacetone phosphate (DHAP) and L-lactaldehyde. The polypeptide is Rhamnulose-1-phosphate aldolase (Salmonella paratyphi B (strain ATCC BAA-1250 / SPB7)).